The primary structure comprises 346 residues: NADH-ubiquinone oxidoreductase chain 2 (346 aa).

11 consecutive transmembrane segments (helical) span residues 1-21 (MNPH…TITI), 25-45 (HWVL…PLIS), 60-80 (FLTQ…NAWA), 95-115 (CLLL…HFWF), 124-144 (LMTA…LLLM), 149-169 (LNPA…GWMG), 178-195 (ILAF…IILV), 200-219 (LALL…FMAL), 242-262 (ATLM…GFMP), 274-294 (EMTP…FFYL), and 326-346 (AILA…HAIV).

Belongs to the complex I subunit 2 family.

It localises to the mitochondrion inner membrane. The enzyme catalyses a ubiquinone + NADH + 5 H(+)(in) = a ubiquinol + NAD(+) + 4 H(+)(out). In terms of biological role, core subunit of the mitochondrial membrane respiratory chain NADH dehydrogenase (Complex I) that is believed to belong to the minimal assembly required for catalysis. Complex I functions in the transfer of electrons from NADH to the respiratory chain. The immediate electron acceptor for the enzyme is believed to be ubiquinone. The sequence is that of NADH-ubiquinone oxidoreductase chain 2 (MT-ND2) from Anas acuta (Northern pintail).